The sequence spans 308 residues: tRNA dimethylallyltransferase (308 aa).

G9–T16 provides a ligand contact to ATP. T11–T16 lines the substrate pocket. The segment at D34–Q37 is interaction with substrate tRNA.

Belongs to the IPP transferase family. In terms of assembly, monomer. Mg(2+) is required as a cofactor.

It carries out the reaction adenosine(37) in tRNA + dimethylallyl diphosphate = N(6)-dimethylallyladenosine(37) in tRNA + diphosphate. Catalyzes the transfer of a dimethylallyl group onto the adenine at position 37 in tRNAs that read codons beginning with uridine, leading to the formation of N6-(dimethylallyl)adenosine (i(6)A). The chain is tRNA dimethylallyltransferase from Lactobacillus delbrueckii subsp. bulgaricus (strain ATCC 11842 / DSM 20081 / BCRC 10696 / JCM 1002 / NBRC 13953 / NCIMB 11778 / NCTC 12712 / WDCM 00102 / Lb 14).